Here is a 507-residue protein sequence, read N- to C-terminus: Sugar transport protein 8 (507 aa).

The Cytoplasmic portion of the chain corresponds to 1-21 (MAVVISSNGNSKSFDAKMTVY). A run of 12 helical transmembrane segments spans residues 22-42 (VFICVIIAAVGGLIFGYDIGI), 79-99 (FLQLFTSSLYLAALVASFFAS), 116-136 (IFFLIGVGLAAGAVNIYMLII), 139-159 (ILLGFGVGFGNQAVPLFLSEI), 166-186 (GGLNIVFQLMVTIGILIANIV), 200-220 (IALGGAGIPALILLFGSLLIC), 281-301 (FVIGMLLQFFQQFTGINAIMF), 319-339 (LSAVVTGTINVLSTFVGIFLV), 346-366 (FLLLQSSVHMLICQLVIGIIL), 382-402 (LVVVIFVCVYVMGFAWSWGPL), 419-439 (GFALAVSCNMFFTFVIAQAFL), and 448-468 (GIFFFFSGWIVVMGLFALFFV). Residues 469–507 (PETKGVSIDDMRDSVWKLHWYWKRFMLEEDEHDVEKRTD) lie on the Cytoplasmic side of the membrane.

Belongs to the major facilitator superfamily. Sugar transporter (TC 2.A.1.1) family.

It is found in the membrane. Functionally, mediates an active uptake of hexoses, probably by sugar/hydrogen symport. The polypeptide is Sugar transport protein 8 (STP8) (Arabidopsis thaliana (Mouse-ear cress)).